Reading from the N-terminus, the 131-residue chain is UPF0134 protein MPN_010 (131 aa).

The protein belongs to the UPF0134 family.

The protein is UPF0134 protein MPN_010 of Mycoplasma pneumoniae (strain ATCC 29342 / M129 / Subtype 1) (Mycoplasmoides pneumoniae).